The chain runs to 114 residues: Tyrosine-protein phosphatase 13 (114 aa).

A Tyrosine-protein phosphatase domain is found at 1–114 (WRMLWEHNST…QFGQEGPITI (114 aa)). Glu-82 provides a ligand contact to substrate.

Belongs to the protein-tyrosine phosphatase family.

The catalysed reaction is O-phospho-L-tyrosyl-[protein] + H2O = L-tyrosyl-[protein] + phosphate. This chain is Tyrosine-protein phosphatase 13 (STY-13), found in Styela plicata (Wrinkled sea squirt).